The primary structure comprises 36 residues: Potassium channel toxin alpha-KTx 16.1 (36 aa).

Disulfide bonds link cysteine 7/cysteine 28, cysteine 13/cysteine 33, and cysteine 17/cysteine 35.

This sequence belongs to the short scorpion toxin superfamily. Potassium channel inhibitor family. Alpha-KTx 16 subfamily. As to expression, expressed by the venom gland.

It is found in the secreted. Blocks calcium-activated potassium channels. The polypeptide is Potassium channel toxin alpha-KTx 16.1 (Hottentotta tamulus (Eastern Indian scorpion)).